The following is a 624-amino-acid chain: Ubiquitin carboxyl-terminal hydrolase 16 (624 aa).

Residues 46-620 (VGLSNPANDC…EVYLLFYEIE (575 aa)) enclose the USP domain. The active-site Nucleophile is C55. H424 acts as the Proton acceptor in catalysis. The disordered stretch occupies residues 453–573 (SENPSRVASP…ATDTEASASA (121 aa)). Over residues 479 to 496 (SPPASTSTNSPLSLTPDS) the composition is skewed to low complexity. The segment covering 518-544 (VSFQSTHSSSKQTISPTSAARNSSSLD) has biased composition (polar residues). A compositionally biased stretch (low complexity) spans 546-573 (ARLSSPASRSSLAERNASATDTEASASA).

It belongs to the peptidase C19 family.

The enzyme catalyses Thiol-dependent hydrolysis of ester, thioester, amide, peptide and isopeptide bonds formed by the C-terminal Gly of ubiquitin (a 76-residue protein attached to proteins as an intracellular targeting signal).. This Emericella nidulans (strain FGSC A4 / ATCC 38163 / CBS 112.46 / NRRL 194 / M139) (Aspergillus nidulans) protein is Ubiquitin carboxyl-terminal hydrolase 16 (ubp16).